Here is a 606-residue protein sequence, read N- to C-terminus: Atypical protein kinase C (606 aa).

The 84-residue stretch at 30–113 folds into the PB1 domain; it reads SITVKTAYNG…SQLVIHVFPN (84 aa). A Phorbol-ester/DAG-type zinc finger spans residues 145–195; it reads GHIFQAKRFNRRAFCAYCQDRIWGLGRQGFKCIQCKLLVHKKCHKLVQKHC. One can recognise a Protein kinase domain in the interval 264–532; the sequence is FELIRVIGRG…FMDIVSHPFF (269 aa). Residues 270 to 278 and Lys-293 each bind ATP; that span reads IGRGSYAKV. Residue Asp-388 is the Proton acceptor of the active site. The region spanning 533-604 is the AGC-kinase C-terminal domain; the sequence is KNMDWELLER…VNPLLMSLED (72 aa).

It belongs to the protein kinase superfamily. AGC Ser/Thr protein kinase family. PKC subfamily. Interacts with baz; the interaction is required for apical localization of aPKC in neuroblasts and epithelial cells. Interacts with Dap160; the interaction promotes aPKC apical localization and kinase activity. Interacts with and phosphorylates l(2)gl and yrt. Interacts with crb and ref(2)P. Forms a complex with baz, fz and Patj. Expressed in the testis. In spermatid cysts, localizes near the tips of spermatid flagellar axonemes (at protein level). Detectable in freshly laid eggs before onset of zygotic transcription so is deposited in the egg during oogenesis. At the cellular blastoderm stage, present in all cells except the pole cells. During gastrulation, strongly expressed in tissues undergoing morphogenetic movements such as invaginating mesoderm, proctodeum and cephalic furrow. Strongly expressed in neuroblasts.

It localises to the cytoplasm. Its subcellular location is the cell cortex. It is found in the apicolateral cell membrane. The enzyme catalyses L-seryl-[protein] + ATP = O-phospho-L-seryl-[protein] + ADP + H(+). The catalysed reaction is L-threonyl-[protein] + ATP = O-phospho-L-threonyl-[protein] + ADP + H(+). Serine/threonine protein kinase which is required for apico-basal cell polarity in the germ line as well as in epithelial and neural precursor cells, for epithelial planar cell polarity and for cell proliferation. During oocyte development, required for the posterior translocation of oocyte specification factors and for the posterior establishment of the microtubule organizing center within the presumptive oocyte. Phosphorylates l(2)gl which restricts l(2)gl activity to the oocyte posterior and regulates posterior enrichment of par-1, leading to establishment of correct oocyte polarity. Essential for apical localization of l(2)gl and par-6 in neuroblasts and for exclusion of mira from the apical cortex. Phosphorylates baz which is required for targeting of baz to the postsynaptic region where it is involved in actin organization, and for apical exclusion of baz which is necessary for establishment of the apical/lateral border in epithelial cells. Phosphorylates yrt which prevents its premature apical localization and is necessary for correct epithelial cell polarization. Required for the establishment of mitotic spindle orientation during symmetric division of epithelial cells and for apical exclusion of raps/Pins. Involved in symmetric adherens junction positioning during embryogenesis. Required for polarization of the spermatid cyst which is necessary for sperm differentiation. Required for stimulation of the Toll signaling pathway which activates Dif and dl and plays a role in innate immunity. Plays a role in memory enhancement. This Drosophila melanogaster (Fruit fly) protein is Atypical protein kinase C.